The sequence spans 702 residues: 1,4-alpha-glucan-branching enzyme (702 aa).

The residue at position 2 (alanine 2) is an N-acetylalanine. Residues 62–63 (NE) and 91–93 (WAP) each bind substrate. Tryptophan 107 is a binding site for (1,4-alpha-D-glucosyl)n. 118–121 (DYGK) contributes to the substrate binding site. Lysine 143 contributes to the (1,4-alpha-D-glucosyl)n binding site. Residue tyrosine 173 is modified to Phosphotyrosine. 333–336 (EILR) serves as a coordination point for substrate. The active-site Nucleophile is aspartate 357. Glutamate 412 acts as the Proton donor in catalysis.

The protein belongs to the glycosyl hydrolase 13 family. GlgB subfamily. As to quaternary structure, monomer.

The enzyme catalyses Transfers a segment of a (1-&gt;4)-alpha-D-glucan chain to a primary hydroxy group in a similar glucan chain.. The protein operates within glycan biosynthesis; glycogen biosynthesis. Glycogen-branching enzyme participates in the glycogen biosynthetic process along with glycogenin and glycogen synthase. Generates alpha-1,6-glucosidic branches from alpha-1,4-linked glucose chains, to increase solubility of the glycogen polymer. This is 1,4-alpha-glucan-branching enzyme (GBE1) from Homo sapiens (Human).